Consider the following 326-residue polypeptide: Inactive peptidyl-prolyl cis-trans isomerase FKBP6 (326 aa).

The 90-residue stretch at 53 to 142 (DASVLVKYSG…LFEIELLDFL (90 aa)) folds into the PPIase FKBP-type domain. TPR repeat units follow at residues 170–203 (AATE…LHRR), 218–251 (LLVF…DRKN), and 252–285 (AKAL…QPFN).

Belongs to the FKBP6 family. Interacts with HSP72/HSPA2 and CLTC. Interacts with GAPDH; leading to inhibit GAPDH catalytic activity. Interacts (via TPR repeats) with HSP90.

The protein localises to the cytoplasm. Its subcellular location is the cytosol. It is found in the nucleus. Co-chaperone required during spermatogenesis to repress transposable elements and prevent their mobilization, which is essential for the germline integrity. Acts via the piRNA metabolic process, which mediates the repression of transposable elements during meiosis by forming complexes composed of piRNAs and Piwi proteins and govern the methylation and subsequent repression of transposons. Acts as a co-chaperone via its interaction with HSP90 and is required for the piRNA amplification process, the secondary piRNA biogenesis. May be required together with HSP90 in removal of 16 nucleotide ping-pong by-products from Piwi complexes, possibly facilitating turnover of Piwi complexes. The sequence is that of Inactive peptidyl-prolyl cis-trans isomerase FKBP6 (FKBP6) from Bos taurus (Bovine).